The primary structure comprises 365 residues: uncharacterized protein (365 aa).

Over 1-133 the chain is Cytoplasmic; that stretch reads MVLAKQWVLK…RKLDKNKVGK (133 aa). A helical transmembrane segment spans residues 134-154; that stretch reads LWWYLSVLGGTSLTAYFIFFT. At 155-169 the chain is on the extracellular side; it reads YAQLQEREEDYGKVY. The helical transmembrane segment at 170 to 190 threads the bilayer; that stretch reads LISGAAGAVGTVCIQLALNVF. Residues 191 to 365 lie on the Cytoplasmic side of the membrane; that stretch reads KASKVIAIAG…KLITKVNNEE (175 aa).

The protein resides in the membrane. This is an uncharacterized protein from Saccharomyces cerevisiae (strain ATCC 204508 / S288c) (Baker's yeast).